Reading from the N-terminus, the 208-residue chain is Sodium/potassium-transporting ATPase subunit beta-1-interacting protein 4 (208 aa).

The next 4 membrane-spanning stretches (helical) occupy residues 10–30, 35–55, 62–82, and 151–171; these read LILLCTLQLVAALERQVFDFL, APILANFLHIVATILGLFGTL, VIAYALWAAVWVTWNVFLICF, and ALQILLALLGFVYACYVTSVF.

The protein belongs to the NKAIN family. In terms of assembly, interacts with atp1b1 C-terminus.

Its subcellular location is the cell membrane. This Xenopus tropicalis (Western clawed frog) protein is Sodium/potassium-transporting ATPase subunit beta-1-interacting protein 4 (nkain4).